The following is a 539-amino-acid chain: Capsid protein VP1 (539 aa).

The tract at residues 1-221 (MKMASNDANP…FIFLVPPTVE (221 aa)) is shell domain. A P1 sub-domain 1 region spans residues 222–274 (SRTKPFTVPVLTVEEMSNSRFPIPLEKLYTGPSSAFVVQPQNGRCTTDGVLLG). Positions 222–539 (SRTKPFTVPV…GNGTGRRRAL (318 aa)) are protruding domain. Residues 275–417 (TTQLSAVNIC…SGRTGHNVHL (143 aa)) are P2 sub-domain. Positions 418 to 539 (APAVAPTFPG…GNGTGRRRAL (122 aa)) are P1 sub-domain 2.

Belongs to the caliciviridae capsid protein family. In terms of assembly, homodimer. Homomultimer. Interacts with the minor capsid protein VP2. Interacts (via C-terminus) with host type I histo-blood group structures antigens at the surface of target cells. May be cleaved by host protease to generate soluble capsid protein. Assembled capsid cannot be cleaved.

It localises to the virion. The protein localises to the host cytoplasm. Capsid protein self assembles to form an icosahedral capsid with a T=3 symmetry, about 38 nm in diameter, and consisting of 180 capsid proteins. A smaller form of capsid with a diameter of 23 nm might be capsid proteins assembled as icosahedron with T=1 symmetry. The capsid encapsulates the genomic RNA and is decorated with VP2 proteins. Attaches virion to target cells by binding histo-blood group antigens (HBGAs) present on gastroduodenal epithelial cells. Its function is as follows. The soluble capsid protein may play a role in viral immunoevasion. This is Capsid protein VP1 from Homo sapiens (Human).